Reading from the N-terminus, the 459-residue chain is Argininosuccinate lyase (459 aa).

Belongs to the lyase 1 family. Argininosuccinate lyase subfamily.

The protein resides in the cytoplasm. The catalysed reaction is 2-(N(omega)-L-arginino)succinate = fumarate + L-arginine. It functions in the pathway amino-acid biosynthesis; L-arginine biosynthesis; L-arginine from L-ornithine and carbamoyl phosphate: step 3/3. The polypeptide is Argininosuccinate lyase (Lactococcus lactis subsp. lactis (strain IL1403) (Streptococcus lactis)).